Consider the following 1212-residue polypeptide: DNA-directed RNA polymerase subunit beta' (1212 aa).

The Zn(2+) site is built by Cys-60, Cys-62, Cys-75, and Cys-78. Mg(2+)-binding residues include Asp-450, Asp-452, and Asp-454. 4 residues coordinate Zn(2+): Cys-819, Cys-893, Cys-900, and Cys-903.

This sequence belongs to the RNA polymerase beta' chain family. As to quaternary structure, the RNAP catalytic core consists of 2 alpha, 1 beta, 1 beta' and 1 omega subunit. When a sigma factor is associated with the core the holoenzyme is formed, which can initiate transcription. Mg(2+) is required as a cofactor. It depends on Zn(2+) as a cofactor.

It carries out the reaction RNA(n) + a ribonucleoside 5'-triphosphate = RNA(n+1) + diphosphate. In terms of biological role, DNA-dependent RNA polymerase catalyzes the transcription of DNA into RNA using the four ribonucleoside triphosphates as substrates. The polypeptide is DNA-directed RNA polymerase subunit beta' (Streptococcus uberis (strain ATCC BAA-854 / 0140J)).